We begin with the raw amino-acid sequence, 289 residues long: Ribosomal RNA small subunit methyltransferase A (289 aa).

Asparagine 21, leucine 23, glycine 48, glutamate 69, aspartate 94, and asparagine 120 together coordinate S-adenosyl-L-methionine.

This sequence belongs to the class I-like SAM-binding methyltransferase superfamily. rRNA adenine N(6)-methyltransferase family. RsmA subfamily.

It is found in the cytoplasm. The enzyme catalyses adenosine(1518)/adenosine(1519) in 16S rRNA + 4 S-adenosyl-L-methionine = N(6)-dimethyladenosine(1518)/N(6)-dimethyladenosine(1519) in 16S rRNA + 4 S-adenosyl-L-homocysteine + 4 H(+). Its function is as follows. Specifically dimethylates two adjacent adenosines (A1518 and A1519) in the loop of a conserved hairpin near the 3'-end of 16S rRNA in the 30S particle. May play a critical role in biogenesis of 30S subunits. This is Ribosomal RNA small subunit methyltransferase A from Actinobacillus pleuropneumoniae serotype 3 (strain JL03).